Consider the following 697-residue polypeptide: Polyribonucleotide nucleotidyltransferase (697 aa).

Residues aspartate 484 and aspartate 490 each coordinate Mg(2+). Positions 551–610 (PRITTIWVKTDKIRDVIGSGGKNIRGITEATGVSIDIEDSGRINIASTSKEACDKAIKMI) constitute a KH domain. Positions 620 to 688 (GKLYMGTVKK…KQGKIKLSRK (69 aa)) constitute an S1 motif domain.

Belongs to the polyribonucleotide nucleotidyltransferase family. It depends on Mg(2+) as a cofactor.

It is found in the cytoplasm. The catalysed reaction is RNA(n+1) + phosphate = RNA(n) + a ribonucleoside 5'-diphosphate. Involved in mRNA degradation. Catalyzes the phosphorolysis of single-stranded polyribonucleotides processively in the 3'- to 5'-direction. This is Polyribonucleotide nucleotidyltransferase from Geobacter sulfurreducens (strain ATCC 51573 / DSM 12127 / PCA).